A 116-amino-acid chain; its full sequence is Large ribosomal subunit protein bL17 (116 aa).

This sequence belongs to the bacterial ribosomal protein bL17 family. In terms of assembly, part of the 50S ribosomal subunit. Contacts protein L32.

This Thermosynechococcus vestitus (strain NIES-2133 / IAM M-273 / BP-1) protein is Large ribosomal subunit protein bL17.